The chain runs to 209 residues: Putative thymidylate synthase (209 aa).

C137 is a catalytic residue.

Belongs to the thymidylate synthase family. Archaeal-type ThyA subfamily. As to quaternary structure, monomer.

It localises to the cytoplasm. Its pathway is pyrimidine metabolism; dTTP biosynthesis. In terms of biological role, may catalyze the biosynthesis of dTMP using an unknown cosubstrate. This is Putative thymidylate synthase from Methanopyrus kandleri (strain AV19 / DSM 6324 / JCM 9639 / NBRC 100938).